A 274-amino-acid polypeptide reads, in one-letter code: Phosphatidylglycerol--prolipoprotein diacylglyceryl transferase (274 aa).

Transmembrane regions (helical) follow at residues 16 to 36 (VGLHLSWYGIFFSLGIFLSSF), 62 to 82 (FALGALLVIVIGARAFYVLFY), 94 to 114 (IIKIWKGGLSSHGAIIALVIW), and 129 to 149 (LSVTYICDICGAVFGVAALLI). Arg150 provides a ligand contact to a 1,2-diacyl-sn-glycero-3-phospho-(1'-sn-glycerol). 3 helical membrane passes run 184-204 (VQLYEGVSYLLLSLVLYWLCY), 213-233 (GYSAAGALIGVASIRFCAEFF), and 247-267 (LTIGQWLSIPMVFLGIGILWI).

Belongs to the Lgt family.

The protein resides in the cell inner membrane. It catalyses the reaction L-cysteinyl-[prolipoprotein] + a 1,2-diacyl-sn-glycero-3-phospho-(1'-sn-glycerol) = an S-1,2-diacyl-sn-glyceryl-L-cysteinyl-[prolipoprotein] + sn-glycerol 1-phosphate + H(+). It functions in the pathway protein modification; lipoprotein biosynthesis (diacylglyceryl transfer). In terms of biological role, catalyzes the transfer of the diacylglyceryl group from phosphatidylglycerol to the sulfhydryl group of the N-terminal cysteine of a prolipoprotein, the first step in the formation of mature lipoproteins. This is Phosphatidylglycerol--prolipoprotein diacylglyceryl transferase from Chlamydia muridarum (strain MoPn / Nigg).